The chain runs to 203 residues: Imidazoleglycerol-phosphate dehydratase (203 aa).

The interval 184-203 is disordered; that stretch reads DPRRSSQIPSSKGVLEQAGQ.

This sequence belongs to the imidazoleglycerol-phosphate dehydratase family.

Its subcellular location is the cytoplasm. It carries out the reaction D-erythro-1-(imidazol-4-yl)glycerol 3-phosphate = 3-(imidazol-4-yl)-2-oxopropyl phosphate + H2O. Its pathway is amino-acid biosynthesis; L-histidine biosynthesis; L-histidine from 5-phospho-alpha-D-ribose 1-diphosphate: step 6/9. This chain is Imidazoleglycerol-phosphate dehydratase, found in Prochlorococcus marinus (strain NATL1A).